Consider the following 428-residue polypeptide: 3-phosphoshikimate 1-carboxyvinyltransferase (428 aa).

Residues Lys-22, Ser-23, and Arg-27 each coordinate 3-phosphoshikimate. Lys-22 is a phosphoenolpyruvate binding site. Phosphoenolpyruvate is bound by residues Gly-96 and Arg-124. The 3-phosphoshikimate site is built by Ser-171, Ser-172, Gln-173, Ser-198, Asp-311, and Lys-338. Gln-173 is a phosphoenolpyruvate binding site. Asp-311 serves as the catalytic Proton acceptor. Arg-342 and Arg-383 together coordinate phosphoenolpyruvate.

The protein belongs to the EPSP synthase family. Monomer.

It localises to the cytoplasm. The enzyme catalyses 3-phosphoshikimate + phosphoenolpyruvate = 5-O-(1-carboxyvinyl)-3-phosphoshikimate + phosphate. It functions in the pathway metabolic intermediate biosynthesis; chorismate biosynthesis. Functionally, catalyzes the transfer of the enolpyruvyl moiety of phosphoenolpyruvate (PEP) to the 5-hydroxyl of shikimate-3-phosphate (S3P) to produce enolpyruvyl shikimate-3-phosphate and inorganic phosphate. The sequence is that of 3-phosphoshikimate 1-carboxyvinyltransferase from Methanopyrus kandleri (strain AV19 / DSM 6324 / JCM 9639 / NBRC 100938).